We begin with the raw amino-acid sequence, 839 residues long: Probable beta-glucosidase I (839 aa).

A glycan (N-linked (GlcNAc...) asparagine) is linked at N197. D225 is an active-site residue. The region spanning 396 to 556 is the PA14 domain; the sequence is DGKTGFKFRV…TQEELISKAV (161 aa). N494 is a glycosylation site (N-linked (GlcNAc...) asparagine).

It belongs to the glycosyl hydrolase 3 family.

Its subcellular location is the secreted. It carries out the reaction Hydrolysis of terminal, non-reducing beta-D-glucosyl residues with release of beta-D-glucose.. It functions in the pathway glycan metabolism; cellulose degradation. Beta-glucosidases are one of a number of cellulolytic enzymes, and catalyze the last step releasing glucose from the inhibitory cellobiose. This Emericella nidulans (strain FGSC A4 / ATCC 38163 / CBS 112.46 / NRRL 194 / M139) (Aspergillus nidulans) protein is Probable beta-glucosidase I (bglI).